Consider the following 414-residue polypeptide: NADH kinase POS5, mitochondrial (414 aa).

The protein belongs to the NAD kinase family.

It is found in the mitochondrion matrix. The enzyme catalyses NADH + ATP = ADP + NADPH + H(+). In terms of biological role, phosphorylates both NADH and NAD(+), with a twofold preference for NADH. Anti-oxidant factor and key source of the cellular reductant NADPH. The chain is NADH kinase POS5, mitochondrial (POS5) from Saccharomyces cerevisiae (strain ATCC 204508 / S288c) (Baker's yeast).